A 271-amino-acid polypeptide reads, in one-letter code: ATP synthase subunit delta (271 aa).

The protein belongs to the ATPase delta chain family. F-type ATPases have 2 components, F(1) - the catalytic core - and F(0) - the membrane proton channel. F(1) has five subunits: alpha(3), beta(3), gamma(1), delta(1), epsilon(1). F(0) has three main subunits: a(1), b(2) and c(10-14). The alpha and beta chains form an alternating ring which encloses part of the gamma chain. F(1) is attached to F(0) by a central stalk formed by the gamma and epsilon chains, while a peripheral stalk is formed by the delta and b chains.

It is found in the cell membrane. Functionally, f(1)F(0) ATP synthase produces ATP from ADP in the presence of a proton or sodium gradient. F-type ATPases consist of two structural domains, F(1) containing the extramembraneous catalytic core and F(0) containing the membrane proton channel, linked together by a central stalk and a peripheral stalk. During catalysis, ATP synthesis in the catalytic domain of F(1) is coupled via a rotary mechanism of the central stalk subunits to proton translocation. Its function is as follows. This protein is part of the stalk that links CF(0) to CF(1). It either transmits conformational changes from CF(0) to CF(1) or is implicated in proton conduction. The chain is ATP synthase subunit delta from Corynebacterium kroppenstedtii (strain DSM 44385 / JCM 11950 / CIP 105744 / CCUG 35717).